We begin with the raw amino-acid sequence, 325 residues long: 26S proteasome non-ATPase regulatory subunit 7 (325 aa).

Positions 8–142 (TIVHPTVLLS…TKSYVTVEEI (135 aa)) constitute an MPN domain. Positions 285–325 (KKADIINSTPPTTATSPSVADKGKEKEQNAFNGADKPSKQA) are disordered. A compositionally biased stretch (low complexity) spans 292–302 (STPPTTATSPS).

The protein belongs to the peptidase M67A family.

Its function is as follows. Acts as a regulatory subunit of the 26S proteasome which is involved in the ATP-dependent degradation of ubiquitinated proteins. In Dictyostelium discoideum (Social amoeba), this protein is 26S proteasome non-ATPase regulatory subunit 7 (psmD7).